We begin with the raw amino-acid sequence, 228 residues long: MAIEVKICGLSTAETLEAALAAGADLVGFVHFPKSPRHVPLEAAPALSRAVAGRAAKVLLLVDPDDATLAAAVAAFQPDIIQLHGKESPERVAAIRARTGRPVMKALPVSGPADLAVVPAYAAVADRLLFDAKPAPDDTLPGGNGRVFDWTLLAGLDPGRPVMLSGGLDAGNVSQALSVVRLDGVDVSSGVETAPGLKSPEKILAFVRAVKAAEAASRPSRLKKVEAP.

The protein belongs to the TrpF family.

The catalysed reaction is N-(5-phospho-beta-D-ribosyl)anthranilate = 1-(2-carboxyphenylamino)-1-deoxy-D-ribulose 5-phosphate. The protein operates within amino-acid biosynthesis; L-tryptophan biosynthesis; L-tryptophan from chorismate: step 3/5. The protein is N-(5'-phosphoribosyl)anthranilate isomerase of Azorhizobium caulinodans (strain ATCC 43989 / DSM 5975 / JCM 20966 / LMG 6465 / NBRC 14845 / NCIMB 13405 / ORS 571).